A 59-amino-acid polypeptide reads, in one-letter code: Large ribosomal subunit protein bL32 (59 aa).

The span at 1-19 (MPVPKRRMSRSNTRSRRAQ) shows a compositional bias: basic residues. The interval 1 to 20 (MPVPKRRMSRSNTRSRRAQW) is disordered.

The protein belongs to the bacterial ribosomal protein bL32 family.

This chain is Large ribosomal subunit protein bL32, found in Acidothermus cellulolyticus (strain ATCC 43068 / DSM 8971 / 11B).